Reading from the N-terminus, the 496-residue chain is Thiamine transporter 2 (496 aa).

Over 1-7 the chain is Cytoplasmic; the sequence is MDCYRTS. A helical membrane pass occupies residues 8–28; it reads PSNSWIYTTVILCIFGFFSMM. The Extracellular portion of the chain corresponds to 29–53; that stretch reads RPSEPFLIPYLSGPDKNLTSEEMTN. Residue Asn-45 is glycosylated (N-linked (GlcNAc...) asparagine). Residues 54–74 traverse the membrane as a helical segment; that stretch reads EIFPVWTYSYLVLLLPVLVLT. Topologically, residues 75-81 are cytoplasmic; that stretch reads DYVRYKP. The chain crosses the membrane as a helical span at residues 82-102; it reads VIILQGISFIITWLLLLFGQG. Topologically, residues 103 to 110 are extracellular; it reads VKTMQVVE. The helical transmembrane segment at 111–131 threads the bilayer; that stretch reads FFYGMVTATEVAYYAYIYSVV. The Cytoplasmic segment spans residues 132–144; that stretch reads SPEHYQRVSGYCR. The helical transmembrane segment at 145–165 threads the bilayer; that stretch reads SVTLVAYTAGSVLAQLLVSLA. N-linked (GlcNAc...) asparagine glycosylation occurs at Asn-166. Over 166-169 the chain is Extracellular; the sequence is NLSY. The chain crosses the membrane as a helical span at residues 170 to 190; that stretch reads FYLNVISLASVSVAFLFSLFL. Residues 191-282 are Cytoplasmic-facing; it reads PMPKKSMFFH…YSSKRLFYWS (92 aa). The interval 210–248 is disordered; the sequence is SSSVNPVLEETHEGEAPDCEKQKPTSEIPSTSGKLHKGQ. Residues 218 to 233 are compositionally biased toward basic and acidic residues; that stretch reads EETHEGEAPDCEKQKP. Residues 234–248 are compositionally biased toward polar residues; sequence TSEIPSTSGKLHKGQ. A helical transmembrane segment spans residues 283 to 303; that stretch reads LWWAFATAGFNQILNYVQILW. The Extracellular portion of the chain corresponds to 304-316; the sequence is DYKSPSQDSSIYN. The chain crosses the membrane as a helical span at residues 317–337; that stretch reads GAVEATATFGGAVAAFAVGYV. The Cytoplasmic segment spans residues 338–342; that stretch reads KVNWD. A helical membrane pass occupies residues 343 to 363; the sequence is LLGELALAVFSVVNAGSLFLM. At 364–375 the chain is on the extracellular side; the sequence is HYTANIWACYAG. A helical membrane pass occupies residues 376–396; the sequence is YLIFKSSYMLLITIAVFQIAV. Residues 397–405 lie on the Cytoplasmic side of the membrane; the sequence is NLSVERYAL. Residues 406-426 form a helical membrane-spanning segment; that stretch reads VFGINTFIALVIQTIITVIVV. The Extracellular segment spans residues 427-434; sequence DQRGLNLP. The chain crosses the membrane as a helical span at residues 435–455; that stretch reads ISIQFLVYGSYFAVIAGIFLM. The Cytoplasmic segment spans residues 456-496; that stretch reads RSMYIIYSTKSQKDVQSPAPSENPDMSHPEEESNAIMSTKL. The interval 469–496 is disordered; the sequence is DVQSPAPSENPDMSHPEEESNAIMSTKL.

Belongs to the reduced folate carrier (RFC) transporter (TC 2.A.48) family.

The protein localises to the membrane. It carries out the reaction thiamine(out) + H(+)(in) = thiamine(in) + H(+)(out). It catalyses the reaction pyridoxine(out) + n H(+)(out) = pyridoxine(in) + n H(+)(in). In terms of biological role, mediates high affinity thiamine uptake, probably via a proton anti-port mechanism. Has no folate transport activity. Mediates H(+)-dependent pyridoxine transport. In Macaca fascicularis (Crab-eating macaque), this protein is Thiamine transporter 2 (SLC19A3).